The sequence spans 159 residues: Ribosomal RNA large subunit methyltransferase H (159 aa).

S-adenosyl-L-methionine contacts are provided by residues glycine 108 and 127–132 (FGKLTM).

Belongs to the RNA methyltransferase RlmH family. As to quaternary structure, homodimer.

Its subcellular location is the cytoplasm. It catalyses the reaction pseudouridine(1915) in 23S rRNA + S-adenosyl-L-methionine = N(3)-methylpseudouridine(1915) in 23S rRNA + S-adenosyl-L-homocysteine + H(+). Functionally, specifically methylates the pseudouridine at position 1915 (m3Psi1915) in 23S rRNA. This chain is Ribosomal RNA large subunit methyltransferase H, found in Lactobacillus helveticus (strain DPC 4571).